A 162-amino-acid chain; its full sequence is NADH-quinone oxidoreductase subunit I (162 aa).

4Fe-4S ferredoxin-type domains lie at 53–83 (LRRYPNGEERCIACKLCEAVCPALAITIESE) and 93–122 (TRYDIDLTKCIFCGFCEESCPVDSIVETHI). [4Fe-4S] cluster-binding residues include C63, C66, C69, C73, C102, C105, C108, and C112.

Belongs to the complex I 23 kDa subunit family. In terms of assembly, NDH-1 is composed of 14 different subunits. Subunits NuoA, H, J, K, L, M, N constitute the membrane sector of the complex. It depends on [4Fe-4S] cluster as a cofactor.

It is found in the cell inner membrane. The enzyme catalyses a quinone + NADH + 5 H(+)(in) = a quinol + NAD(+) + 4 H(+)(out). In terms of biological role, NDH-1 shuttles electrons from NADH, via FMN and iron-sulfur (Fe-S) centers, to quinones in the respiratory chain. The immediate electron acceptor for the enzyme in this species is believed to be ubiquinone. Couples the redox reaction to proton translocation (for every two electrons transferred, four hydrogen ions are translocated across the cytoplasmic membrane), and thus conserves the redox energy in a proton gradient. The sequence is that of NADH-quinone oxidoreductase subunit I from Bordetella bronchiseptica (strain ATCC BAA-588 / NCTC 13252 / RB50) (Alcaligenes bronchisepticus).